The following is a 322-amino-acid chain: Ferrochelatase (322 aa).

Histidine 194 and glutamate 275 together coordinate Fe cation.

This sequence belongs to the ferrochelatase family.

It is found in the cytoplasm. It catalyses the reaction heme b + 2 H(+) = protoporphyrin IX + Fe(2+). It participates in porphyrin-containing compound metabolism; protoheme biosynthesis; protoheme from protoporphyrin-IX: step 1/1. Its function is as follows. Catalyzes the ferrous insertion into protoporphyrin IX. This chain is Ferrochelatase, found in Yersinia enterocolitica.